The following is a 478-amino-acid chain: tRNA(Ile)-lysidine synthase (478 aa).

27 to 32 is a binding site for ATP; the sequence is SGGSDS.

This sequence belongs to the tRNA(Ile)-lysidine synthase family.

It is found in the cytoplasm. It catalyses the reaction cytidine(34) in tRNA(Ile2) + L-lysine + ATP = lysidine(34) in tRNA(Ile2) + AMP + diphosphate + H(+). Ligates lysine onto the cytidine present at position 34 of the AUA codon-specific tRNA(Ile) that contains the anticodon CAU, in an ATP-dependent manner. Cytidine is converted to lysidine, thus changing the amino acid specificity of the tRNA from methionine to isoleucine. The polypeptide is tRNA(Ile)-lysidine synthase (Rickettsia africae (strain ESF-5)).